A 110-amino-acid chain; its full sequence is Secreted Ly-6/uPAR-related protein 1 (110 aa).

Residues 1 to 22 form the signal peptide; sequence MTLRWAMWLLLLAAWSMGYGEA. In terms of domain architecture, UPAR/Ly6 spans 24–73; the sequence is RCYTCEQPTAINSCKNIAQCKMEDTACKTVLETVEAAFPFNHSPMVTRSC. 5 cysteine pairs are disulfide-bonded: C25–C50, C28–C37, C43–C73, C77–C93, and C94–C99.

As to quaternary structure, homodimer. Interacts with PLAU. Interacts with CHRNA7. In terms of tissue distribution, expressed in skin, eye, whole lung, trachea, esophagus and stomach. Widely expressed in various tissues including spleen and thymus but not pancreas. Expressed in macrophages, dendritic cells, T and B cells. Expressed in lung specifically in ciliated bronchial epithelial cells (at protein level). Expression is decreased in lungs of asthmatic model mice. Expressed in the cornea.

Its subcellular location is the secreted. Has an antitumor activity. Was found to be a marker of late differentiation of the skin. Implicated in maintaining the physiological and structural integrity of the keratinocyte layers of the skin. In vitro down-regulates keratinocyte proliferation; the function may involve the proposed role as modulator of nicotinic acetylcholine receptors (nAChRs) activity. In vitro inhibits alpha-7-dependent nAChR currents in an allosteric manner. In T cells may be involved in regulation of intracellular Ca(2+) signaling. Seems to have a immunomodulatory function in the cornea. The function may implicate a possible role as a scavenger receptor for PLAU thereby blocking PLAU-dependent functions of PLAUR such as in cell migration and proliferation. In Mus musculus (Mouse), this protein is Secreted Ly-6/uPAR-related protein 1 (Slurp1).